Consider the following 325-residue polypeptide: MKRLGSVQRKMPCVFVTEVKEEPSSKREHQPFKVLATETISHKALDADIYSAIPTEKVDGTCCYVTTYKDQPYLWARLDRKPNKQAEKRFKNFLHSKENAKEFFWNVEEDFKPAPECWIPAKEIEQINGNPVPDENGHIPGWVPVEKNNKQYCWHSSVVNYEFEIALVLKHHPDDSGLLEISAVPLSDLLEQTLELVGTNINGNPYGLGSKKHPLHLLIPHGAFQIRNLPSLKHNDLLSWFEGCKEGKIEGIVWHCSDGCLIKVHRHHLGLCWPIPDTYMNSRPVIINMNLNKCDSAFDIKCLFNHFLKIDNQKFARLKDIIFDV.

The cofactor is Mg(2+). It depends on Mn(2+) as a cofactor. In terms of processing, AMPylates itself (auto-AMPylation).

The catalysed reaction is ATP + (ribonucleotide)n-3'-hydroxyl + 5'-phospho-(ribonucleotide)m = (ribonucleotide)n+m + AMP + diphosphate.. Functions as an RNA ligase, in vitro. The ligation reaction entails three nucleotidyl transfer steps. In the first step, the RNA ligase reacts with ATP in the absence of nucleic acid to form a covalent ligase-AMP intermediate and release pyrophosphate. In step 2, the ligase-AMP binds to the nucleic acid and transfers the adenylate to the 5'-PO4 terminus to form an adenylylated intermediate. In step 3, the RNA ligase directs the attack of the 3'-OH on the 5'-phosphoanhydride linkage, resulting in a repaired 3'-5' phosphodiester and release of AMP. Exhibits selectivity for single-stranded RNA substrates and may not have nick-sealing activity on double-stranded DNA-RNA hybrids. May play a role in maintaining RNA integrity under stress conditions, for example in response to reactive oxygen species (ROS). The protein is RNA ligase 1 of Pongo abelii (Sumatran orangutan).